Here is a 689-residue protein sequence, read N- to C-terminus: Dipeptidyl aminopeptidase BIII (689 aa).

Residues 1–26 form the signal peptide; sequence MRHPAFRLTLLASTVAFALAPQAAQA. Residues serine 506, aspartate 593, and histidine 625 each act as charge relay system in the active site.

It belongs to the peptidase S9C family. Monomer.

With respect to regulation, strongly inhibited by the serine protease inhibitor diisopropyl fluorophosphate (DFP), chymostatin, leupeptin, 0.5 mM ZnCl(2), 10 mM o-phenanthlorine and N-tosyl-L-phenyl-alanyl chloromethyl ketone (TPCK), but not by N-tosyl-L-lysyl chloromethyl ketone (TLCK). Activity is not affected significantly by iodoacetate (IAA), L-trans-epoxysuccinyl-leucylamido(4-guanido)butane (E64), pepstatin A and phenylmethanesulfonyl fluoride (PMSF). Activity is stimulated by addition of 0.5 mM CaCl(2), 10 mM EDTA and N-ethylmaleimide (NEM). In terms of biological role, exopeptidase that catalyzes the removal of dipeptide units (NH2-P2-P1- or -P1'-P2'-COOH) from the free amino or carboxy termini. Prefers substrates composed of bulky, hydrophobic amino acids at P1 and P1' positions. Has endopeptidase activity on N-terminally blocked peptide derivatives which contain aromatic amino acid residue at the P1 position. Exopeptidase activity is much higher than its endopeptidase activity. The protein is Dipeptidyl aminopeptidase BIII of Pseudoxanthomonas mexicana.